A 1235-amino-acid polypeptide reads, in one-letter code: Gem-associated protein 5 (1235 aa).

The stretch at 55-102 is one WD 1 repeat; it reads STRINILALDVSPMWGLGNGGPTKPFAIVGDDLSVQVWDCALGEAVIG. Residues 227–263 form a disordered region; the sequence is NNLALSAEEWRSRNGGQEEKPKTKPPPLTKSKAAESD. Positions 234 to 248 are enriched in basic and acidic residues; the sequence is EEWRSRNGGQEEKPK. Serine 289, serine 290, serine 351, and serine 354 each carry phosphoserine. The tract at residues 340–368 is disordered; sequence DCEPTKPTGPLSDASTISNKNDASDSTEG. Residues 352-368 are compositionally biased toward polar residues; that stretch reads DASTISNKNDASDSTEG. At threonine 355 the chain carries Phosphothreonine. Residue serine 357 is modified to Phosphoserine. Threonine 411 is subject to Phosphothreonine. WD repeat units lie at residues 428–469, 475–512, 565–605, 611–650, 690–730, 739–779, and 788–828; these read ISAE…HAGK, KTAG…KMLR, TVAF…TSCL, YVSS…VKTH, TIVN…EKSW, LFAR…RNWK, and TEKA…KPPL. Positions 443 to 447 match the LXXLL motif motif; it reads LETLL. Positions 963–980 are enriched in basic and acidic residues; sequence KEQNNRSAKECPKCKEQS. Residues 963 to 983 form a disordered region; that stretch reads KEQNNRSAKECPKCKEQSPDS.

As to quaternary structure, component of the core survival motor neuron (SMN) complex composed of Smn, Gem2, Gem3, rig/Gem5 and one of 3 almost identical Gem4 paralogs encoded by Glos/Gem4a, Gem4b or Gem4c. Interacts with nuclear receptors EcR, svp (seven up), usp (ultraspiracle), Hr39 and Hr3. As to expression, expressed in the brain and salivary glands of early and late second instar larvae. Expressed in nurse cells and oocytes.

It is found in the nucleus. The protein localises to the cytoplasm. It localises to the U-body. The protein resides in the gem. Its function is as follows. Component of the survival motor neuron (SMN) complex that catalyzes the assembly of small nuclear ribonucleoproteins (snRNPs), the building blocks of the spliceosome, and thereby plays an important role in the splicing of cellular pre-mRNAs. Nuclear receptor cofactor for the ecdysone-regulated processes of molting and puparium formation. Acts downstream from ecdysone biosynthesis and release to control the expression of specific ecdysone-regulated genes such as Eip74EF (E74). Essential in muscle and neuronal tissues for motor function, including climbing ability and flight. The sequence is that of Gem-associated protein 5 from Drosophila melanogaster (Fruit fly).